Here is a 318-residue protein sequence, read N- to C-terminus: Fibronectin type III domain-containing protein 11 (318 aa).

The 98-residue stretch at 210–307 folds into the Fibronectin type-III domain; sequence VVFDRKASAA…DSLTLHTKPE (98 aa).

The sequence is that of Fibronectin type III domain-containing protein 11 (FNDC11) from Homo sapiens (Human).